A 50-amino-acid chain; its full sequence is Protein HokA (50 aa).

Residues 7 to 24 (LLSLIVICFTLLFFTWMI) traverse the membrane as a helical segment.

The protein belongs to the Hok/Gef family.

The protein resides in the cell inner membrane. Its function is as follows. Toxic component of a type I toxin-antitoxin (TA) system. When overexpressed kills cells within minutes; causes collapse of the transmembrane potential and arrest of respiration. Its toxic effect is probably neutralized by antisense antitoxin RNA SokA. The sequence is that of Protein HokA from Escherichia coli (strain K12).